Reading from the N-terminus, the 136-residue chain is Large-conductance mechanosensitive channel (136 aa).

Helical transmembrane passes span phenylalanine 10–glycine 30 and glycine 76–isoleucine 96.

The protein belongs to the MscL family. Homopentamer.

It is found in the cell inner membrane. In terms of biological role, channel that opens in response to stretch forces in the membrane lipid bilayer. May participate in the regulation of osmotic pressure changes within the cell. The chain is Large-conductance mechanosensitive channel from Pectobacterium atrosepticum (strain SCRI 1043 / ATCC BAA-672) (Erwinia carotovora subsp. atroseptica).